The primary structure comprises 342 residues: DDB1- and CUL4-associated factor 7 (342 aa).

WD repeat units lie at residues 6–52 (KRKE…LVGL), 60–100 (ICRN…VWRV), 108–150 (ECLL…IWGL), 165–206 (HVKT…MFDL), 213–252 (TIIY…ILDV), 257–296 (TPVA…IWDI), and 303–342 (IEDP…ILRV).

The protein belongs to the WD repeat DCAF7 family. In terms of assembly, interacts with DYRK1A, DYRK1B and DIAPH1. Interacts with DDB1. Interacts with ZNF703. Interacts with human adenovirus 5 E1A protein.

It localises to the cytoplasm. The protein resides in the nucleus. It functions in the pathway protein modification; protein ubiquitination. Its function is as follows. Involved in craniofacial development. Acts upstream of the EDN1 pathway and is required for formation of the upper jaw equivalent, the palatoquadrate. The activity required for EDN1 pathway function differs between the first and second arches. Associates with DIAPH1 and controls GLI1 transcriptional activity. Could be involved in normal and disease skin development. May function as a substrate receptor for CUL4-DDB1 E3 ubiquitin-protein ligase complex. This is DDB1- and CUL4-associated factor 7 (DCAF7) from Homo sapiens (Human).